The sequence spans 366 residues: 3-beta-hydroxysteroid dehydrogenase (366 aa).

Catalysis depends on Tyr154, which acts as the Proton donor.

Belongs to the 3-beta-HSD family.

The enzyme catalyses testosterone + NAD(+) = androst-4-ene-3,17-dione + NADH + H(+). It catalyses the reaction testosterone + NADP(+) = androst-4-ene-3,17-dione + NADPH + H(+). In terms of biological role, catalyzes the degradation of testosterone into androstenedione. In Mycolicibacterium neoaurum (Mycobacterium neoaurum), this protein is 3-beta-hydroxysteroid dehydrogenase.